The following is a 107-amino-acid chain: Growth-regulated alpha protein (107 aa).

The signal sequence occupies residues 1–34; it reads MARAALSAAPSNPRLLRVALLLLLLVAAGRRAAG. Intrachain disulfides connect Cys-43/Cys-69 and Cys-45/Cys-85.

It belongs to the intercrine alpha (chemokine CxC) family. In terms of processing, N-terminal processed forms GRO-alpha(4-73), GRO-alpha(5-73) and GRO-alpha(6-73) are produced by proteolytic cleavage after secretion from peripheral blood monocytes.

It localises to the secreted. Its function is as follows. Has chemotactic activity for neutrophils. May play a role in inflammation and exerts its effects on endothelial cells in an autocrine fashion. In vitro, the processed forms GRO-alpha(4-73), GRO-alpha(5-73) and GRO-alpha(6-73) show a 30-fold higher chemotactic activity. The chain is Growth-regulated alpha protein (CXCL1) from Homo sapiens (Human).